The following is a 207-amino-acid chain: Large ribosomal subunit protein uL4 (207 aa).

Positions 49–78 are disordered; the sequence is HAVKNRSAVRGGGRKPWRQKGTGRARQGSI. Basic residues predominate over residues 60–71; it reads GGRKPWRQKGTG.

This sequence belongs to the universal ribosomal protein uL4 family. In terms of assembly, part of the 50S ribosomal subunit.

Functionally, one of the primary rRNA binding proteins, this protein initially binds near the 5'-end of the 23S rRNA. It is important during the early stages of 50S assembly. It makes multiple contacts with different domains of the 23S rRNA in the assembled 50S subunit and ribosome. Forms part of the polypeptide exit tunnel. In Enterococcus faecalis (strain ATCC 700802 / V583), this protein is Large ribosomal subunit protein uL4.